The primary structure comprises 312 residues: MKWSEISIHTTEEAVEAVSHILHEAGASGVAIEDPAELTKEREQQYGEIYALNPDEYPAEGVLIKAYFPQTDSLHETIAGVKSSIDVLPSYDIEIGTGNITVNEVNEEDWATAWKKYYHPVQISDTFTIVPTWEEYTPSSPEEKIIELDPGMAFGTGTHPTTTMCIRALEKTVQPGDTIIDVGTGSGVLSIAAAKLGASSVQAYDLDPVAVESAEMNVRLNKTDDVVSVGQNSLLEGIEGPVDLIVANLLAEIILLFPEDAARVVKSGGLFITSGIIAAKEKVISEALEKAGFTIEEVLRMEDWVAIIARNA.

Residues Thr-162, Gly-183, Asp-205, and Asn-248 each coordinate S-adenosyl-L-methionine.

This sequence belongs to the methyltransferase superfamily. PrmA family.

The protein localises to the cytoplasm. It carries out the reaction L-lysyl-[protein] + 3 S-adenosyl-L-methionine = N(6),N(6),N(6)-trimethyl-L-lysyl-[protein] + 3 S-adenosyl-L-homocysteine + 3 H(+). Its function is as follows. Methylates ribosomal protein L11. The protein is Ribosomal protein L11 methyltransferase of Bacillus anthracis (strain A0248).